We begin with the raw amino-acid sequence, 66 residues long: Prokaryotic ubiquitin-like protein Pup (66 aa).

Low complexity predominate over residues 1 to 10 (MAGQEQQSSS). Positions 1–39 (MAGQEQQSSSPREEEHEVADAPVPVPSSPQASAHTDGVD) are disordered. Residues 23–60 (VPVPSSPQASAHTDGVDDLLDEIDGVLESNAEEFVRGF) are ARC ATPase binding. The residue at position 66 (Gln66) is a Deamidated glutamine. Gln66 participates in a covalent cross-link: Isoglutamyl lysine isopeptide (Gln-Lys) (interchain with K-? in acceptor proteins).

This sequence belongs to the prokaryotic ubiquitin-like protein family. In terms of assembly, strongly interacts with the proteasome-associated ATPase ARC through a hydrophobic interface; the interacting region of Pup lies in its C-terminal half. There is one Pup binding site per ARC hexamer ring. Is modified by deamidation of its C-terminal glutamine to glutamate by the deamidase Dop, a prerequisite to the subsequent pupylation process.

It participates in protein degradation; proteasomal Pup-dependent pathway. Protein modifier that is covalently attached to lysine residues of substrate proteins, thereby targeting them for proteasomal degradation. The tagging system is termed pupylation. The sequence is that of Prokaryotic ubiquitin-like protein Pup from Renibacterium salmoninarum (strain ATCC 33209 / DSM 20767 / JCM 11484 / NBRC 15589 / NCIMB 2235).